Reading from the N-terminus, the 310-residue chain is Nucleotide-binding protein MAP_1147 (310 aa).

Residue 30–37 coordinates ATP; it reads GLSGAGRG. Position 81–84 (81–84) interacts with GTP; the sequence is DVRS.

The protein belongs to the RapZ-like family.

In terms of biological role, displays ATPase and GTPase activities. The chain is Nucleotide-binding protein MAP_1147 from Mycolicibacterium paratuberculosis (strain ATCC BAA-968 / K-10) (Mycobacterium paratuberculosis).